Reading from the N-terminus, the 140-residue chain is 3-hydroxyacyl-[acyl-carrier-protein] dehydratase FabZ (140 aa).

The active site involves H46.

This sequence belongs to the thioester dehydratase family. FabZ subfamily.

It is found in the cytoplasm. The catalysed reaction is a (3R)-hydroxyacyl-[ACP] = a (2E)-enoyl-[ACP] + H2O. Functionally, involved in unsaturated fatty acids biosynthesis. Catalyzes the dehydration of short chain beta-hydroxyacyl-ACPs and long chain saturated and unsaturated beta-hydroxyacyl-ACPs. This chain is 3-hydroxyacyl-[acyl-carrier-protein] dehydratase FabZ, found in Pseudothermotoga lettingae (strain ATCC BAA-301 / DSM 14385 / NBRC 107922 / TMO) (Thermotoga lettingae).